We begin with the raw amino-acid sequence, 171 residues long: Putative lipoprotein LppO (171 aa).

The signal sequence occupies residues Met1–Ala28. Residue Cys29 is the site of N-palmitoyl cysteine attachment. Cys29 carries the S-diacylglycerol cysteine lipid modification.

It is found in the cell membrane. The protein is Putative lipoprotein LppO (lppO) of Mycobacterium tuberculosis (strain CDC 1551 / Oshkosh).